The sequence spans 428 residues: Glutamate-1-semialdehyde 2,1-aminomutase 1 (428 aa).

Position 267 is an N6-(pyridoxal phosphate)lysine (K267).

The protein belongs to the class-III pyridoxal-phosphate-dependent aminotransferase family. HemL subfamily. In terms of assembly, homodimer. It depends on pyridoxal 5'-phosphate as a cofactor.

Its subcellular location is the cytoplasm. The enzyme catalyses (S)-4-amino-5-oxopentanoate = 5-aminolevulinate. Its pathway is porphyrin-containing compound metabolism; protoporphyrin-IX biosynthesis; 5-aminolevulinate from L-glutamyl-tRNA(Glu): step 2/2. This is Glutamate-1-semialdehyde 2,1-aminomutase 1 from Staphylococcus aureus (strain Mu3 / ATCC 700698).